The sequence spans 464 residues: UPF0210 protein MA_1691 (464 aa).

The protein belongs to the UPF0210 family.

The sequence is that of UPF0210 protein MA_1691 from Methanosarcina acetivorans (strain ATCC 35395 / DSM 2834 / JCM 12185 / C2A).